Reading from the N-terminus, the 145-residue chain is 3-hydroxyacyl-[acyl-carrier-protein] dehydratase FabZ (145 aa).

His49 is an active-site residue.

It belongs to the thioester dehydratase family. FabZ subfamily.

The protein resides in the cytoplasm. It carries out the reaction a (3R)-hydroxyacyl-[ACP] = a (2E)-enoyl-[ACP] + H2O. Functionally, involved in unsaturated fatty acids biosynthesis. Catalyzes the dehydration of short chain beta-hydroxyacyl-ACPs and long chain saturated and unsaturated beta-hydroxyacyl-ACPs. The chain is 3-hydroxyacyl-[acyl-carrier-protein] dehydratase FabZ from Rickettsia africae (strain ESF-5).